The primary structure comprises 94 residues: ATP-dependent Clp protease adapter protein ClpS (94 aa).

This sequence belongs to the ClpS family. In terms of assembly, binds to the N-terminal domain of the chaperone ClpA.

Functionally, involved in the modulation of the specificity of the ClpAP-mediated ATP-dependent protein degradation. This chain is ATP-dependent Clp protease adapter protein ClpS, found in Thermosynechococcus vestitus (strain NIES-2133 / IAM M-273 / BP-1).